The following is a 164-amino-acid chain: MEMLQGLLLCLLLSTGGAWASKEPLRPLCRPVNAILAAEKEGCPVCVAFNTTICAGYCSSMVRVLQTILPPLPQSVCNYHELRFTSVRLPGCRPGVDPVVSMPVALSCRCGLCRRSYSDCGSLRNEPLGCDYSTFQDSSSKDPPRNLTSPSQLLEPADPPLVPQ.

The N-terminal stretch at 1–20 is a signal peptide; sequence MEMLQGLLLCLLLSTGGAWA. Intrachain disulfides connect Cys-29–Cys-77, Cys-43–Cys-92, Cys-46–Cys-130, Cys-54–Cys-108, Cys-58–Cys-110, and Cys-113–Cys-120. Asn-50 is a glycosylation site (N-linked (GlcNAc...) asparagine). Residues 135 to 164 form a disordered region; sequence FQDSSSKDPPRNLTSPSQLLEPADPPLVPQ. Ser-140 carries an O-linked (GalNAc...) serine glycan. Asn-146 carries an N-linked (GlcNAc...) asparagine glycan. An O-linked (GalNAc...) serine glycan is attached at Ser-151.

It belongs to the glycoprotein hormones subunit beta family. Heterodimer of a common alpha chain and a unique beta chain which confers biological specificity to thyrotropin, lutropin, follitropin and gonadotropin. In terms of tissue distribution, placenta.

It localises to the secreted. Functionally, stimulates the ovaries to synthesize the steroids that are essential for the maintenance of pregnancy. The chain is Choriogonadotropin subunit beta (CGB) from Callithrix jacchus (White-tufted-ear marmoset).